The primary structure comprises 380 residues: Succinyl-diaminopimelate desuccinylase (380 aa).

His-70 lines the Zn(2+) pocket. The active site involves Asp-72. Position 104 (Asp-104) interacts with Zn(2+). The Proton acceptor role is filled by Glu-138. 3 residues coordinate Zn(2+): Glu-139, Glu-167, and His-353.

The protein belongs to the peptidase M20A family. DapE subfamily. In terms of assembly, homodimer. It depends on Zn(2+) as a cofactor. Co(2+) is required as a cofactor.

The catalysed reaction is N-succinyl-(2S,6S)-2,6-diaminopimelate + H2O = (2S,6S)-2,6-diaminopimelate + succinate. It participates in amino-acid biosynthesis; L-lysine biosynthesis via DAP pathway; LL-2,6-diaminopimelate from (S)-tetrahydrodipicolinate (succinylase route): step 3/3. Its function is as follows. Catalyzes the hydrolysis of N-succinyl-L,L-diaminopimelic acid (SDAP), forming succinate and LL-2,6-diaminopimelate (DAP), an intermediate involved in the bacterial biosynthesis of lysine and meso-diaminopimelic acid, an essential component of bacterial cell walls. This Ectopseudomonas mendocina (strain ymp) (Pseudomonas mendocina) protein is Succinyl-diaminopimelate desuccinylase.